Reading from the N-terminus, the 495-residue chain is MRINPTTSGSTVPTLEEKNLGRIAQIIGPVLDVVFPPGKMPNIYNALVVKGRDTVGQQINVTCEVQQLLGNNRVRAVAMSATDGLTRGMEVIDTGAALSVPVGGATLGRIFNVLGEPVDNLGPVDTRTTSPIHRSAPAFIQLDTKLSIFETGIKVVDLLAPYRRGGKIGLFGGAGVGKTVLIMELINNIAKAHGGVSVFGGVGERTREGNDLYMEMKESGVINEKNIAESKVALVYGQMNEPPGARMRVGLTALTMAEYFRDVNEQDVLLFIDNIFRFVQAGSEVSALLGRMPSAVGYQPTLSTEMGSLQERITSTKEGSITSIQAVYVPADDLTDPAPATTFAHLDATTVLSRGLSAKGIYPAVDPLDSTSTMLQPRIVGEEHYETAQRVKQTLQRYKELQDIIAILGLDELSEEDRLTVARARKIERFLSQPFFVAEVFTGSPGKYVGLAETIRGFQLILSGELDGLPEQAFYLVGNIDEATAKAMNLEGEKK.

172–179 (GGAGVGKT) contributes to the ATP binding site.

It belongs to the ATPase alpha/beta chains family. F-type ATPases have 2 components, CF(1) - the catalytic core - and CF(0) - the membrane proton channel. CF(1) has five subunits: alpha(3), beta(3), gamma(1), delta(1), epsilon(1). CF(0) has four main subunits: a(1), b(1), b'(1) and c(9-12).

It localises to the plastid. The protein localises to the chloroplast thylakoid membrane. The enzyme catalyses ATP + H2O + 4 H(+)(in) = ADP + phosphate + 5 H(+)(out). In terms of biological role, produces ATP from ADP in the presence of a proton gradient across the membrane. The catalytic sites are hosted primarily by the beta subunits. The protein is ATP synthase subunit beta, chloroplastic of Scilla siberica (Siberian squill).